Reading from the N-terminus, the 170-residue chain is Peptide deformylase (170 aa).

Fe cation-binding residues include Cys-91 and His-133. Residue Glu-134 is part of the active site. His-137 lines the Fe cation pocket.

This sequence belongs to the polypeptide deformylase family. It depends on Fe(2+) as a cofactor.

The enzyme catalyses N-terminal N-formyl-L-methionyl-[peptide] + H2O = N-terminal L-methionyl-[peptide] + formate. In terms of biological role, removes the formyl group from the N-terminal Met of newly synthesized proteins. Requires at least a dipeptide for an efficient rate of reaction. N-terminal L-methionine is a prerequisite for activity but the enzyme has broad specificity at other positions. In Pasteurella multocida (strain Pm70), this protein is Peptide deformylase.